Reading from the N-terminus, the 44-residue chain is pyr operon leader peptide (44 aa).

This Escherichia coli O157:H7 protein is pyr operon leader peptide (pyrL).